A 761-amino-acid polypeptide reads, in one-letter code: Phosphoribosylformylglycinamidine synthase subunit PurL (761 aa).

The active site involves histidine 58. Residues tyrosine 61 and lysine 105 each contribute to the ATP site. Glutamate 107 provides a ligand contact to Mg(2+). Residues 108 to 111 (SHNH) and arginine 130 contribute to the substrate site. The active-site Proton acceptor is the histidine 109. A Mg(2+)-binding site is contributed by aspartate 131. Substrate is bound at residue glutamine 259. Position 287 (aspartate 287) interacts with Mg(2+). A substrate-binding site is contributed by 331 to 333 (ESQ). Residues asparagine 519 and glycine 556 each coordinate ATP. Residue asparagine 557 participates in Mg(2+) binding. Serine 559 is a binding site for substrate.

The protein belongs to the FGAMS family. As to quaternary structure, monomer. Part of the FGAM synthase complex composed of 1 PurL, 1 PurQ and 2 PurS subunits.

It is found in the cytoplasm. The enzyme catalyses N(2)-formyl-N(1)-(5-phospho-beta-D-ribosyl)glycinamide + L-glutamine + ATP + H2O = 2-formamido-N(1)-(5-O-phospho-beta-D-ribosyl)acetamidine + L-glutamate + ADP + phosphate + H(+). Its pathway is purine metabolism; IMP biosynthesis via de novo pathway; 5-amino-1-(5-phospho-D-ribosyl)imidazole from N(2)-formyl-N(1)-(5-phospho-D-ribosyl)glycinamide: step 1/2. Part of the phosphoribosylformylglycinamidine synthase complex involved in the purines biosynthetic pathway. Catalyzes the ATP-dependent conversion of formylglycinamide ribonucleotide (FGAR) and glutamine to yield formylglycinamidine ribonucleotide (FGAM) and glutamate. The FGAM synthase complex is composed of three subunits. PurQ produces an ammonia molecule by converting glutamine to glutamate. PurL transfers the ammonia molecule to FGAR to form FGAM in an ATP-dependent manner. PurS interacts with PurQ and PurL and is thought to assist in the transfer of the ammonia molecule from PurQ to PurL. This chain is Phosphoribosylformylglycinamidine synthase subunit PurL, found in Rhodococcus jostii (strain RHA1).